Here is a 383-residue protein sequence, read N- to C-terminus: MTAHADLSPTLQLAIDLIRRPSVTPVDADCQKQMMQRLGDAGFQLEPMRIEDVDNFWATHGKGDGPVLCFAGHTDVVPTGPVTAWQIDPFNAVIDEHGMLCGRGAADMKGSLASMTVAAERFVADYPDHKGKVAFLITSDEEGPAHHGTKAVVERLAARNERLDWCIVGEPSSTTLVGDVVKNGRRGSLGAKLTVRGVQGHVAYPHLAKNPIHLAAPALAELAAEHWDHGNDFFPPTSFQISNVNSGTGATNVIPGDLVAVFNFRFSTESTVEGLQKRVADILDKHGLDWHIDWALSGLPFLTEPGALLDAVSSSIKDITGRETKASTSGGTSDGRFIATMGTQVVELGPVNATIHQVNERVLAADLDVLTEIYYQTLIKLLA.

His73 contacts Zn(2+). Asp75 is a catalytic residue. Asp107 provides a ligand contact to Zn(2+). Glu141 serves as the catalytic Proton acceptor. Zn(2+) is bound by residues Glu142, Glu170, and His356.

This sequence belongs to the peptidase M20A family. DapE subfamily. As to quaternary structure, homodimer. It depends on Zn(2+) as a cofactor. Co(2+) is required as a cofactor.

It catalyses the reaction N-succinyl-(2S,6S)-2,6-diaminopimelate + H2O = (2S,6S)-2,6-diaminopimelate + succinate. It functions in the pathway amino-acid biosynthesis; L-lysine biosynthesis via DAP pathway; LL-2,6-diaminopimelate from (S)-tetrahydrodipicolinate (succinylase route): step 3/3. Its function is as follows. Catalyzes the hydrolysis of N-succinyl-L,L-diaminopimelic acid (SDAP), forming succinate and LL-2,6-diaminopimelate (DAP), an intermediate involved in the bacterial biosynthesis of lysine and meso-diaminopimelic acid, an essential component of bacterial cell walls. The polypeptide is Succinyl-diaminopimelate desuccinylase (Pseudomonas fluorescens (strain Pf0-1)).